A 146-amino-acid polypeptide reads, in one-letter code: Kappa-casein (146 aa).

4 O-linked (GalNAc...) threonine glycosylation sites follow: T97, T107, T112, and T118. At T121 the chain carries Phosphothreonine. Phosphoserine; alternate is present on S125. Residue S125 is glycosylated (O-linked (GalNAc...) serine; alternate). O-linked (GalNAc...) threonine glycosylation is present at T142. S143 bears the Phosphoserine mark.

Belongs to the kappa-casein family. As to expression, mammary gland specific. Secreted in milk.

The protein localises to the secreted. Kappa-casein stabilizes micelle formation, preventing casein precipitation in milk. The chain is Kappa-casein (CSN3) from Panthera uncia (Snow leopard).